Here is a 295-residue protein sequence, read N- to C-terminus: tRNA-cytidine(32) 2-sulfurtransferase (295 aa).

The PP-loop motif motif lies at 63 to 68 (SGGKDS). The [4Fe-4S] cluster site is built by Cys-138, Cys-141, and Cys-229.

Belongs to the TtcA family. As to quaternary structure, homodimer. Mg(2+) serves as cofactor. The cofactor is [4Fe-4S] cluster.

The protein localises to the cytoplasm. The enzyme catalyses cytidine(32) in tRNA + S-sulfanyl-L-cysteinyl-[cysteine desulfurase] + AH2 + ATP = 2-thiocytidine(32) in tRNA + L-cysteinyl-[cysteine desulfurase] + A + AMP + diphosphate + H(+). It participates in tRNA modification. Its function is as follows. Catalyzes the ATP-dependent 2-thiolation of cytidine in position 32 of tRNA, to form 2-thiocytidine (s(2)C32). The sulfur atoms are provided by the cysteine/cysteine desulfurase (IscS) system. The sequence is that of tRNA-cytidine(32) 2-sulfurtransferase from Mesorhizobium japonicum (strain LMG 29417 / CECT 9101 / MAFF 303099) (Mesorhizobium loti (strain MAFF 303099)).